We begin with the raw amino-acid sequence, 85 residues long: UPF0386 protein RL2079 (85 aa).

It belongs to the UPF0386 family.

The polypeptide is UPF0386 protein RL2079 (Rhizobium johnstonii (strain DSM 114642 / LMG 32736 / 3841) (Rhizobium leguminosarum bv. viciae)).